A 189-amino-acid chain; its full sequence is Adenine phosphoribosyltransferase (189 aa).

Belongs to the purine/pyrimidine phosphoribosyltransferase family. In terms of assembly, homodimer.

It is found in the cytoplasm. It catalyses the reaction AMP + diphosphate = 5-phospho-alpha-D-ribose 1-diphosphate + adenine. It participates in purine metabolism; AMP biosynthesis via salvage pathway; AMP from adenine: step 1/1. Functionally, catalyzes a salvage reaction resulting in the formation of AMP, that is energically less costly than de novo synthesis. This chain is Adenine phosphoribosyltransferase, found in Frankia alni (strain DSM 45986 / CECT 9034 / ACN14a).